Reading from the N-terminus, the 224-residue chain is uncharacterized protein (224 aa).

Transmembrane regions (helical) follow at residues M25–F45, I54–I74, I91–F111, F119–L139, I142–I162, and H174–F194.

It localises to the cell membrane. This is an uncharacterized protein from Mycoplasma genitalium (strain ATCC 33530 / DSM 19775 / NCTC 10195 / G37) (Mycoplasmoides genitalium).